A 3284-amino-acid polypeptide reads, in one-letter code: Location of vulva defective 1 (3284 aa).

The first 21 residues, 1–21 (MKKSNFFVLLLLAISAIQIDG), serve as a signal peptide directing secretion. 5 disordered regions span residues 226 to 326 (ESTS…ITST), 350 to 505 (TTML…GTNP), 623 to 702 (VASS…ADST), 827 to 926 (STSE…ASTE), and 1043 to 1216 (TTTE…SLAT). Low complexity-rich tracts occupy residues 227–326 (STST…ITST) and 350–500 (TTML…TTSS). The segment covering 827-913 (STSEVTSTTS…PSDSSSASDS (87 aa)) has biased composition (low complexity). The segment covering 914–926 (MRTTTVDPDASTE) has biased composition (polar residues). Residues 1043–1057 (TTTETPPTTVSSSDD) show a composition bias toward low complexity. Residues 1060–1078 (GKTGGTGATGGTGGTGSGG) are compositionally biased toward gly residues. The span at 1079–1104 (SATTLSTGDAVRSTTSGSGSGQSSTG) shows a compositional bias: low complexity. Gly residues predominate over residues 1105-1127 (SGAGGSGTTASGSGSGGSSGTGS). Positions 1128 to 1138 (DGVNSGKTTAL) are enriched in polar residues. Over residues 1163-1192 (GSGSDSNGSSGVSTKSSSGSDTSGSSDSSG) the composition is skewed to low complexity. Over residues 1197 to 1216 (FSATAQPSTRTTKTRSSLAT) the composition is skewed to polar residues. In terms of domain architecture, GAIN-B spans 2064–2227 (WNNSLQVEII…SVGAFNPTID (164 aa)). C2181 and C2209 are oxidised to a cystine. Residues 2181–2227 (CYFYQKTSDVFNSEGMYPSDGQGMQFVNCSTDHLTMFSVGAFNPTID) are GPS. The helical transmembrane segment at 2245-2265 (VMIAAVFMLVVYGCLTINAII) threads the bilayer. In terms of domain architecture, PLAT spans 2288 to 2411 (YMYVIAVETG…GDGETERLAR (124 aa)). Transmembrane regions (helical) follow at residues 2453 to 2473 (DYSV…ITIL), 2496 to 2516 (IAFG…HILL), 2557 to 2577 (IIVF…MSLM), 2592 to 2612 (LILW…FLIL), 2672 to 2692 (LFIT…MVML), 2945 to 2965 (MLYI…YLYG), 2994 to 3014 (WNFM…AYTI), 3043 to 3063 (WEIV…CKMI), 3089 to 3109 (FGIA…AVLG), and 3144 to 3164 (FAFV…LQLY).

The protein belongs to the polycystin family. As to quaternary structure, interacts (via PLAT domain) with atp-2 (via N-terminus) and with kin-10 (via C-terminus). Interacts (via C-terminus) with isoform a of stam-1/pqn-19 (via C-terminus). In terms of processing, autoproteolytically processed at the GPS region of the GAIN-B domain; this cleavage modulates receptor activity. In terms of tissue distribution, exclusively expressed in a subset of three categories of adult male sensory neurons: ray neurons, hook neurons and head cephalic (CEM) neurons.

The protein localises to the membrane. It is found in the cell projection. The protein resides in the cilium. Its function is as follows. Required for two aspects of male mating behavior: response to hermaphrodite contact and vulva location. Acts in the same pathway as pkd-2 and atp-2 in response behavior. May be required for ciliary targeting of pkd-2. The polypeptide is Location of vulva defective 1 (lov-1) (Caenorhabditis elegans).